Reading from the N-terminus, the 911-residue chain is ATP-dependent DNA helicase Q-like 5 (911 aa).

Positions 1–84 (MDFDSDSDGS…PPPSPLFTNL (84 aa)) are disordered. Residues 20–48 (SFPSSPPQLQSPAKHVPPVSRKMTSSSSR) show a composition bias toward low complexity. Residues 54–79 (PTHPPPNPSQEAPVPSPYPPPPPPSP) show a composition bias toward pro residues. A Helicase ATP-binding domain is found at 278–448 (IKMILGGSST…MSSLEIPSTN (171 aa)). 291–298 (LPTGAGKS) provides a ligand contact to ATP. Residues 390–393 (DEAH) carry the DEAH box motif. Residues 470–628 (RMKDLLILME…VFSTETKQHE (159 aa)) enclose the Helicase C-terminal domain.

The protein belongs to the helicase family. RecQ subfamily. In terms of tissue distribution, mostly expressed in roots, seedlings, shoots, shoot apical mersitem, flowers, and siliques.

The protein resides in the nucleus. It carries out the reaction Couples ATP hydrolysis with the unwinding of duplex DNA by translocating in the 3'-5' direction.. The catalysed reaction is ATP + H2O = ADP + phosphate + H(+). In terms of biological role, 3'-5' DNA helicase that may play a role in the repair of DNA. This is ATP-dependent DNA helicase Q-like 5 (RECQL5) from Arabidopsis thaliana (Mouse-ear cress).